A 691-amino-acid chain; its full sequence is Mediator of RNA polymerase II transcription subunit 17 (691 aa).

Residues 158-185 (KLESFDAAANKLLQSAQRLEEDIAAETK) are a coiled coil.

This sequence belongs to the Mediator complex subunit 17 family. Component of the Mediator complex.

It localises to the nucleus. Component of the Mediator complex, a coactivator involved in the regulated transcription of nearly all RNA polymerase II-dependent genes. Mediator functions as a bridge to convey information from gene-specific regulatory proteins to the basal RNA polymerase II transcription machinery. Mediator is recruited to promoters by direct interactions with regulatory proteins and serves as a scaffold for the assembly of a functional preinitiation complex with RNA polymerase II and the general transcription factors. This Coccidioides immitis (strain RS) (Valley fever fungus) protein is Mediator of RNA polymerase II transcription subunit 17 (SRB4).